The primary structure comprises 55 residues: Large ribosomal subunit protein bL33 (55 aa).

A compositionally biased stretch (basic and acidic residues) spans 1–11 (MAKGGREKIKL). The disordered stretch occupies residues 1 to 27 (MAKGGREKIKLESTAGTGHFYTTSKNK). Positions 14 to 24 (TAGTGHFYTTS) are enriched in polar residues.

Belongs to the bacterial ribosomal protein bL33 family.

The polypeptide is Large ribosomal subunit protein bL33 (Dechloromonas aromatica (strain RCB)).